Here is an 84-residue protein sequence, read N- to C-terminus: Sec-independent protein translocase protein TatA (84 aa).

A helical transmembrane segment spans residues 1-21 (MPNLGVPELLIIALVIFLLFG). Over residues 42–57 (EMDEMKTDGDKKELAE) the composition is skewed to basic and acidic residues. A disordered region spans residues 42–84 (EMDEMKTDGDKKELAEKQAPTAEQQQAQDLAQPKSEQPNEHNA). Over residues 62–77 (TAEQQQAQDLAQPKSE) the composition is skewed to polar residues.

Belongs to the TatA/E family. As to quaternary structure, the Tat system comprises two distinct complexes: a TatABC complex, containing multiple copies of TatA, TatB and TatC subunits, and a separate TatA complex, containing only TatA subunits. Substrates initially bind to the TatABC complex, which probably triggers association of the separate TatA complex to form the active translocon.

The protein resides in the cell membrane. Part of the twin-arginine translocation (Tat) system that transports large folded proteins containing a characteristic twin-arginine motif in their signal peptide across membranes. TatA could form the protein-conducting channel of the Tat system. This Corynebacterium jeikeium (strain K411) protein is Sec-independent protein translocase protein TatA.